A 67-amino-acid polypeptide reads, in one-letter code: MRIHYLLFAVLFLFLMPVPGEGGIINTIQRYFCRVRGGRCAALTCLPRETQIGRCSVKGRKCCRTRK.

Positions 1-22 (MRIHYLLFAVLFLFLMPVPGEG) are cleaved as a signal peptide. Disulfide bonds link Cys-33/Cys-62, Cys-40/Cys-55, and Cys-45/Cys-63.

As to quaternary structure, monomer. Homodimer. As to expression, highly expressed in tongue, nasopharyngeal mucosa and skin, and to a lower extent in the Eustachian tube, lung and trachea.

The protein localises to the secreted. The protein resides in the membrane. In terms of biological role, has antibacterial activity against Gram-positive bacterium S.pneumoniae Serotype 14. Is also active against Gram-negative bacteria M.catarrhalis 1857, and non-typeable H.influenzae strains 86-028NP and 1128. Has antifungal activity against C.albicans. May have a role in maintaining sterility in the middle ear. May act as a ligand for C-C chemokine receptor CCR6. Positively regulates the sperm motility and bactericidal activity in a CCR6-dependent manner. Binds to CCR6 and triggers Ca2+ mobilization in the sperm which is important for its motility. This is Beta-defensin 1 (DEFB1) from Chinchilla lanigera (Long-tailed chinchilla).